Reading from the N-terminus, the 89-residue chain is Small ribosomal subunit protein uS15 (89 aa).

This sequence belongs to the universal ribosomal protein uS15 family. As to quaternary structure, part of the 30S ribosomal subunit. Forms a bridge to the 50S subunit in the 70S ribosome, contacting the 23S rRNA.

Functionally, one of the primary rRNA binding proteins, it binds directly to 16S rRNA where it helps nucleate assembly of the platform of the 30S subunit by binding and bridging several RNA helices of the 16S rRNA. Forms an intersubunit bridge (bridge B4) with the 23S rRNA of the 50S subunit in the ribosome. This Dinoroseobacter shibae (strain DSM 16493 / NCIMB 14021 / DFL 12) protein is Small ribosomal subunit protein uS15.